Consider the following 375-residue polypeptide: Probable disease resistance protein At1g52660 (375 aa).

In terms of domain architecture, NB-ARC spans 158 to 372; the sequence is ENTGIIGLYG…LSNSPPNFSG (215 aa). 167-174 contacts ATP; that stretch reads GVEGVGKT.

In terms of biological role, possible disease resistance protein. The sequence is that of Probable disease resistance protein At1g52660 from Arabidopsis thaliana (Mouse-ear cress).